We begin with the raw amino-acid sequence, 101 residues long: UPF0235 protein MMP1055 (101 aa).

This sequence belongs to the UPF0235 family.

The sequence is that of UPF0235 protein MMP1055 from Methanococcus maripaludis (strain DSM 14266 / JCM 13030 / NBRC 101832 / S2 / LL).